The sequence spans 61 residues: uncharacterized protein (61 aa).

This is an uncharacterized protein from Rickettsia conorii (strain ATCC VR-613 / Malish 7).